A 1185-amino-acid polypeptide reads, in one-letter code: Pyruvate carboxylase (1185 aa).

The 453-residue stretch at 32–484 folds into the Biotin carboxylation domain; sequence KFTKVLVANR…WTTFIDDTPE (453 aa). ATP is bound by residues Lys-150, Glu-234, and His-269. Residues 154-351 form the ATP-grasp domain; sequence RAIAIRCGVP…IVSAQLHVAA (198 aa). Residue Arg-326 is part of the active site. The Pyruvate carboxyltransferase domain occupies 570–838; that stretch reads GLIMDTTWRD…QLEFDNNQLR (269 aa). Substrate-binding positions include 578–582 and Arg-651; that span reads RDAHQ. Residue Asp-579 participates in a divalent metal cation binding. Residues Lys-747, His-777, and His-779 each coordinate a divalent metal cation. Lys-747 carries the post-translational modification N6-carboxylysine. Thr-912 is a substrate binding site. The region spanning 1108 to 1183 is the Biotinyl-binding domain; that stretch reads RADPGNPGHV…NGGDLCAVLE (76 aa). Position 1149 is an N6-biotinyllysine (Lys-1149).

The cofactor is biotin. Zn(2+) serves as cofactor.

The protein localises to the cytoplasm. The enzyme catalyses hydrogencarbonate + pyruvate + ATP = oxaloacetate + ADP + phosphate + H(+). It participates in carbohydrate biosynthesis; gluconeogenesis. In terms of biological role, pyruvate carboxylase catalyzes a 2-step reaction, involving the ATP-dependent carboxylation of the covalently attached biotin in the first step and the transfer of the carboxyl group to pyruvate in the second. This Schizosaccharomyces pombe (strain 972 / ATCC 24843) (Fission yeast) protein is Pyruvate carboxylase (pyr1).